A 302-amino-acid chain; its full sequence is Adipolin (302 aa).

Positions 1 to 20 are cleaved as a signal peptide; the sequence is MRRWAWAAVVVLLGPQLVLL. Disordered stretches follow at residues 28–68 and 86–110; these read EAQR…GPEF and ALRK…PPGA. Asparagine 43 carries an N-linked (GlcNAc...) asparagine glycan. Residues 86 to 100 show a composition bias toward basic and acidic residues; sequence ALRKRCGSRDKKPRD. Residues 147–302 enclose the C1q domain; it reads LRLVGEAFHC…SSFSGLLLGT (156 aa).

This sequence belongs to the adipolin/erythroferrone family. As to quaternary structure, homomultimer; disulfide-linked. May interact with ERFE. Processed into Adipolin fC1QTNF12 and Adipolin gC1QTNF12 by FURIN. Insulin enhances endogenous C1QTNF12 cleavage. Predominantly expressed by adipose tissues.

Its subcellular location is the secreted. Insulin-sensitizing adipocyte-secreted protein (adipokine) that regulates glucose metabolism in liver and adipose tissue. Promotes glucose uptake in adipocytes and suppresses de novo glucose production in hepatocytes via the PI3K-Akt signaling pathway. Administration lead to reduction of blood glucose. Able to attenuate inflammation in fat tissue. The sequence is that of Adipolin from Homo sapiens (Human).